The primary structure comprises 265 residues: Undecaprenyl-diphosphatase (265 aa).

7 consecutive transmembrane segments (helical) span residues A42–W62, G82–A102, L108–V128, L157–G177, P181–Y201, F217–V237, and T244–V264.

It belongs to the UppP family.

The protein resides in the cell inner membrane. The enzyme catalyses di-trans,octa-cis-undecaprenyl diphosphate + H2O = di-trans,octa-cis-undecaprenyl phosphate + phosphate + H(+). Functionally, catalyzes the dephosphorylation of undecaprenyl diphosphate (UPP). Confers resistance to bacitracin. This chain is Undecaprenyl-diphosphatase, found in Desulfovibrio desulfuricans (strain ATCC 27774 / DSM 6949 / MB).